The chain runs to 97 residues: Co-chaperonin GroES (97 aa).

This sequence belongs to the GroES chaperonin family. Heptamer of 7 subunits arranged in a ring. Interacts with the chaperonin GroEL.

It localises to the cytoplasm. Together with the chaperonin GroEL, plays an essential role in assisting protein folding. The GroEL-GroES system forms a nano-cage that allows encapsulation of the non-native substrate proteins and provides a physical environment optimized to promote and accelerate protein folding. GroES binds to the apical surface of the GroEL ring, thereby capping the opening of the GroEL channel. The chain is Co-chaperonin GroES from Pseudomonas aeruginosa (strain LESB58).